The primary structure comprises 242 residues: Probable transcriptional regulatory protein BTH_I1015 (242 aa).

The protein belongs to the TACO1 family.

It localises to the cytoplasm. In Burkholderia thailandensis (strain ATCC 700388 / DSM 13276 / CCUG 48851 / CIP 106301 / E264), this protein is Probable transcriptional regulatory protein BTH_I1015.